Here is a 703-residue protein sequence, read N- to C-terminus: Probable boron transporter 2 (703 aa).

The Cytoplasmic portion of the chain corresponds to 1 to 35 (MEETFVPFEGIKNDLKGRLMCYKQDWTGGIKAGFR). A helical membrane pass occupies residues 36 to 56 (ILAPTTYIFFASAIPVISFGE). At 57-75 (QLERSTDGVLTAVQTLAST) the chain is on the extracellular side. Residues 76–96 (AICGIIHSIIGGQPLLILGVA) form a helical membrane-spanning segment. Residues 97–120 (EPTVIMYTFMFNFAKGRPELGRNL) are Cytoplasmic-facing. Residues 121-141 (FLAWSGWVCVWTSLILFVLAI) form a helical membrane-spanning segment. Residues 142 to 155 (CGACSFINRFTRVA) are Extracellular-facing. A helical transmembrane segment spans residues 156-176 (GELFGLLIAMLFMQQAIKGLV). At 177-195 (DEFRAPAREDLKLVEFLPS) the chain is on the cytoplasmic side. A helical membrane pass occupies residues 196-216 (WRFANGMFALVLSFGLLITAL). Topologically, residues 217–233 (RSRKARSWRYGTGWLRS) are extracellular. A helical membrane pass occupies residues 234-254 (LVADYGVPLMVLVWTGVSYIP). Over 255-289 (TGDVPKGIPRRLFSPNPWSPGAYENWTVVKEMLQV) the chain is Cytoplasmic. A helical transmembrane segment spans residues 290–310 (PIVYIIGAFIPATMIAVLYYF). Residues 311–337 (DHSVASQLAQQKEFNLRKPSSYHYDLL) are Extracellular-facing. The helical transmembrane segment at 338-358 (LLGFLTLMCGLLGIPPSNGVI) threads the bilayer. At 359 to 480 (PQSPMHTKSL…AVMVGGCVAA (122 aa)) the chain is on the cytoplasmic side. The helical transmembrane segment at 481–501 (MPLLKMIPTSVLWGYFAFMAI) threads the bilayer. Over 502 to 557 (ESLPGNQFWERILLLFTAPSRRFKVLEDNHATFVETVPFKTIAMFTIFQTTYLLTC) the chain is Extracellular. The chain crosses the membrane as a helical span at residues 558 to 578 (FGLTWIPIAGVMFPLLIMFLI). Residues 579 to 703 (PVRQYILPRF…SPLNPSSSSK (125 aa)) are Cytoplasmic-facing. A disordered region spans residues 678-703 (EMSPRLSGKGQNSPKPSPLNPSSSSK).

The protein belongs to the anion exchanger (TC 2.A.31.3) family.

The protein localises to the membrane. Probable boron transporter. Boron is essential for maintaining the integrity of plants cell walls. The protein is Probable boron transporter 2 (BOR2) of Arabidopsis thaliana (Mouse-ear cress).